The chain runs to 217 residues: Large ribosomal subunit protein uL1 (217 aa).

Belongs to the universal ribosomal protein uL1 family. In terms of assembly, part of the 50S ribosomal subunit.

Functionally, binds directly to 23S rRNA. The L1 stalk is quite mobile in the ribosome, and is involved in E site tRNA release. Its function is as follows. Protein L1 is also a translational repressor protein, it controls the translation of the L11 operon by binding to its mRNA. The chain is Large ribosomal subunit protein uL1 from Anaplasma marginale (strain St. Maries).